We begin with the raw amino-acid sequence, 373 residues long: Chorismate synthase (373 aa).

R48 and R54 together coordinate NADP(+). Residues 131–133, 243–244, G288, 303–307, and R329 contribute to the FMN site; these read RSS, NA, and KPTSS.

It belongs to the chorismate synthase family. Homotetramer. FMNH2 serves as cofactor.

The catalysed reaction is 5-O-(1-carboxyvinyl)-3-phosphoshikimate = chorismate + phosphate. The protein operates within metabolic intermediate biosynthesis; chorismate biosynthesis; chorismate from D-erythrose 4-phosphate and phosphoenolpyruvate: step 7/7. In terms of biological role, catalyzes the anti-1,4-elimination of the C-3 phosphate and the C-6 proR hydrogen from 5-enolpyruvylshikimate-3-phosphate (EPSP) to yield chorismate, which is the branch point compound that serves as the starting substrate for the three terminal pathways of aromatic amino acid biosynthesis. This reaction introduces a second double bond into the aromatic ring system. The chain is Chorismate synthase from Beijerinckia indica subsp. indica (strain ATCC 9039 / DSM 1715 / NCIMB 8712).